Reading from the N-terminus, the 188-residue chain is Putative 3-methyladenine DNA glycosylase (188 aa).

The protein belongs to the DNA glycosylase MPG family.

In Ehrlichia ruminantium (Cowdria ruminantium), this protein is Putative 3-methyladenine DNA glycosylase.